The following is a 1036-amino-acid chain: Protein P200 (1036 aa).

The disordered stretch occupies residues 697 to 727; that stretch reads ETSELNTESDPSFEPEVEIQPEPEPNFDLET. Over residues 707–727 the composition is skewed to acidic residues; it reads PSFEPEVEIQPEPEPNFDLET. Tandem repeats lie at residues 718-723, 738-743, and 776-781. Positions 718 to 781 are 3 X 6 AA repeats of E-P-E-P-N-F; sequence EPEPNFDLET…SFESEPEPNF (64 aa). Disordered stretches follow at residues 757–784 and 798–845; these read FESE…FETE and EAEV…ETEA. Positions 773–784 are enriched in acidic residues; that stretch reads FESEPEPNFETE.

Its subcellular location is the cell projection. The protein resides in the attachment organelle. Its function is as follows. Protein cytoskeleton-associated which plays a role in gliding motility and perhaps also in mucociliary clearance. The protein is Protein P200 (p200) of Mycoplasma pneumoniae (strain ATCC 29342 / M129 / Subtype 1) (Mycoplasmoides pneumoniae).